A 186-amino-acid polypeptide reads, in one-letter code: Ribosome-recycling factor (186 aa).

This sequence belongs to the RRF family.

Its subcellular location is the cytoplasm. In terms of biological role, responsible for the release of ribosomes from messenger RNA at the termination of protein biosynthesis. May increase the efficiency of translation by recycling ribosomes from one round of translation to another. In Rickettsia prowazekii (strain Madrid E), this protein is Ribosome-recycling factor.